The following is a 414-amino-acid chain: MLLKIKIKIRLFEKRYTIYFFLLKGKNKEEMEIIKKEFEHLVISELESSMLQKALDYSLTIVDIIKFVEITNFDIDPFMIDKFWHTMYDNSLLYISRDILEWMGYTGEFGEQRKAFKKLLKRKNINFTELSNNDPTKHLYPEIQKDSLLLSNAVVSQSKWIIMNSDDFKDSILMLNTKNSGKIRKYYRSFEKLLKLNLLYTLKFRERADKMQISSLETMMEEMRLERKQSEERSIKQEQLLLSIGYNLKELQEQKEEDTQKIDVLIDQNEDLKQNIEETNDKLDSVVEKLGIAVEDRAPRLKRASIRERFVLFKKNNSTNEIYQYYAIRGQSVYVNGRLSKLQSEKYPDMIILIDIICQPNPRNLFLRFKERIDGKPEWENNFIYAGNNVGCSFKLEKEMINIFKSLDEEKRDV.

Residues 209 to 293 adopt a coiled-coil conformation; sequence DKMQISSLET…DSVVEKLGIA (85 aa).

This chain is Putative MSV199 domain-containing protein 148R, found in Acheta domesticus (House cricket).